Consider the following 217-residue polypeptide: Large ribosomal subunit protein uL16 (217 aa).

Belongs to the universal ribosomal protein uL16 family. As to quaternary structure, component of the small ribosomal subunit. Mature ribosomes consist of a small (40S) and a large (60S) subunit. The 40S subunit contains about 33 different proteins and 1 molecule of RNA (18S). The 60S subunit contains about 49 different proteins and 3 molecules of RNA (25S, 5.8S and 5S).

The protein is Large ribosomal subunit protein uL16 (rpl10) of Dictyostelium discoideum (Social amoeba).